The chain runs to 445 residues: Nuclear hormone receptor family member nhr-1 (445 aa).

The interval 19–55 (PMVNSQRNEDPSMYMNGSAASVSHTNGSSSMGNDQKF) is disordered. Polar residues predominate over residues 36–51 (SAASVSHTNGSSSMGN). The nuclear receptor DNA-binding region spans 70–145 (GELCAVCSDL…VGMDAKALQI (76 aa)). 2 NR C4-type zinc fingers span residues 73–93 (CAVCSDLATGYHYGVASCNGC) and 109–133 (CQYNGNCDVNKNIRCACRHCRFNKC). The region spanning 179 to 444 (QDQEIIDQLT…PFVKELCMKR (266 aa)) is the NR LBD domain.

It belongs to the nuclear hormone receptor family.

Its subcellular location is the nucleus. Its function is as follows. Orphan nuclear receptor which acts in concert with the insulin/IGF-1-like signaling (IIS) pathway during osmotic stress, perhaps in response to a ligand modified by the sulfotransferase ssu-1. In Caenorhabditis elegans, this protein is Nuclear hormone receptor family member nhr-1 (nhr-1).